Here is a 240-residue protein sequence, read N- to C-terminus: MSTRQAVFERDVDEDRWPRSARGLAGVNTVFEGDSEINSKAMRLLEKTRHRRNLLNRREDRRRYLGGVKAKAIESDYYHRNQLPSSYDAGNDDFEPINNSHVESEEENKRLPEKYSLDKYVKRSRKQRDHRHIVAKPKEKRNFAPSKLAMYEIEKYQRSTALLIQKIPFAKLVKEVTEEFAGESQDLRWQSMAILALQEASEAYLVGLLEHTNLLALHAKRITIMKKDMQLARRIRGQFI.

Residues 83–109 are disordered; that stretch reads LPSSYDAGNDDFEPINNSHVESEEENK. The interval 127–238 is H3-like; sequence QRDHRHIVAK…MQLARRIRGQ (112 aa).

The protein belongs to the histone H3 family. Component of centromeric nucleosomes, where DNA is wrapped around a histone octamer core. The octamer contains two molecules each of H2A, H2B, CSE4/CENPA and H4 assembled in one CSE4-H4 heterotetramer and two H2A-H2B heterodimers. Interacts with the inner kinetochore. Ubiquitinated. Is degraded through ubiquitin-mediated proteolysis when not protected by its association to the kinetochore.

It localises to the nucleus. The protein resides in the chromosome. Its subcellular location is the centromere. Histone H3-like nucleosomal protein that is specifically found in centromeric nucleosomes. Replaces conventional H3 in the nucleosome core of centromeric chromatin that serves as an assembly site for the inner kinetochore. Required for recruitment and assembly of kinetochore proteins, mitotic progression and chromosome segregation. May serve as an epigenetic mark that propagates centromere identity through replication and cell division. The chain is Histone H3-like centromeric protein CSE4 (CSE4) from Candida glabrata (strain ATCC 2001 / BCRC 20586 / JCM 3761 / NBRC 0622 / NRRL Y-65 / CBS 138) (Yeast).